Reading from the N-terminus, the 1224-residue chain is A disintegrin and metalloproteinase with thrombospondin motifs 16 (1224 aa).

The N-terminal stretch at 1–24 (MKPRARGWRGLAALWMLLAQVAEQ) is a signal peptide. Residues 25–279 (APACAMGPAA…EYKSCLRHKR (255 aa)) constitute a propeptide that is removed on maturation. The segment at 31 to 53 (GPAAAAPGSPSVPRPPPPAERPG) is disordered. The segment covering 40 to 50 (PSVPRPPPPAE) has biased composition (pro residues). N-linked (GlcNAc...) asparagine glycosylation occurs at Asn-156. Positions 247–254 (HFCGRRKK) match the Cysteine switch motif. Cys-249 is a binding site for Zn(2+). Residues 290-495 (LNVETLVVVD…AQAICLADQP (206 aa)) enclose the Peptidase M12B domain. A glycan (N-linked (GlcNAc...) asparagine) is linked at Asn-310. Intrachain disulfides connect Cys-366–Cys-417, Cys-392–Cys-399, Cys-411–Cys-490, Cys-450–Cys-474, Cys-518–Cys-543, Cys-529–Cys-550, Cys-538–Cys-569, Cys-563–Cys-574, Cys-598–Cys-635, Cys-602–Cys-640, and Cys-613–Cys-625. His-433 contacts Zn(2+). The active site involves Glu-434. Residues His-437 and His-443 each coordinate Zn(2+). The Disintegrin domain maps to 496–585 (KPVKEYKYPE…KYGDEGPKPT (90 aa)). One can recognise a TSP type-1 1 domain in the interval 586–641 (HGHWSDWSSWSPCSRTCGGGVSHRSRLCTNPKPSHGGKFCEGSTRTLKLCNSQKCP). N-linked (GlcNAc...) asparagine glycosylation is found at Asn-741, Asn-780, Asn-835, Asn-905, and Asn-935. Positions 747–873 (IHRGLYTKHH…KQPPAQPSYT (127 aa)) are spacer. TSP type-1 domains are found at residues 874 to 922 (WAIV…LVPC), 927 to 987 (CPPS…QSCP), 988 to 1048 (PAWS…QRCH), 1051 to 1115 (KKLQ…LPCP), and 1127 to 1181 (RGSW…HFCP). 3 disulfide bridges follow: Cys-939–Cys-981, Cys-943–Cys-986, and Cys-954–Cys-970. Residues 1186–1223 (KDAFCKDYFHWCYLVPQHGMCSHKFYGKQCCKTCSKSN) form the PLAC domain.

Requires Zn(2+) as cofactor. Post-translationally, the precursor is cleaved by a furin endopeptidase. Glycosylated. Can be O-fucosylated by POFUT2 on a serine or a threonine residue found within the consensus sequence C1-X(2)-(S/T)-C2-G of the TSP type-1 repeat domains where C1 and C2 are the first and second cysteine residue of the repeat, respectively. Fucosylated repeats can then be further glycosylated by the addition of a beta-1,3-glucose residue by the glucosyltransferase, B3GALTL. Fucosylation mediates the efficient secretion of ADAMTS family members. Can also be C-glycosylated with one or two mannose molecules on tryptophan residues within the consensus sequence W-X-X-W of the TPRs, and N-glycosylated. These other glycosylations can also facilitate secretion. As to expression, expressed in fetal lung and kidney and in adult prostate and ovary.

Its subcellular location is the secreted. It localises to the extracellular space. It is found in the extracellular matrix. This is A disintegrin and metalloproteinase with thrombospondin motifs 16 (ADAMTS16) from Homo sapiens (Human).